Consider the following 231-residue polypeptide: GFP-like fluorescent chromoprotein FP506 (231 aa).

The segment at residues asparagine 66–glycine 68 is a cross-link (5-imidazolinone (Asn-Gly)). Tyrosine 67 is subject to 2,3-didehydrotyrosine.

It belongs to the GFP family. Contains a chromophore consisting of modified amino acid residues. The chromophore is formed by autocatalytic backbone condensation between Xaa-N and Gly-(N+2), and oxidation of Tyr-(N+1) to didehydrotyrosine. Maturation of the chromophore requires nothing other than molecular oxygen. The precise stereochemistry of the tyrosine has not been determined. In terms of tissue distribution, tentacle and oral disk.

Functionally, pigment protein that is yellow-green in color. The polypeptide is GFP-like fluorescent chromoprotein FP506 (Zoanthus sp. (Green polyp)).